The following is a 416-amino-acid chain: Basic salivary proline-rich protein 2 (416 aa).

An N-terminal signal peptide occupies residues 1–16 (MLLILLSVALLALSSA). A Pyrrolidone carboxylic acid modification is found at Gln-17. The span at 19-28 (LNEDVSQEES) shows a compositional bias: polar residues. The disordered stretch occupies residues 19–416 (LNEDVSQEES…QGGRPSRPPQ (398 aa)). Ser-24 is modified (phosphoserine). Residues 34-47 (GNPQGAPPQGGNKP) are compositionally biased toward low complexity. Pro residues-rich tracts occupy residues 48 to 104 (QGPP…PPPQ) and 112 to 165 (RSPP…PPPQ). Ser-52 is subject to Phosphoserine. Tandem repeats lie at residues 53-72 (PPGKPQGPPPQGGNQPQGPP), 74-93 (PPGKPQGPPPQGGNKPQGPP), 94-113 (PPGKPQGPPPQGDKSRSPRS), 114-133 (PPGKPQGPPPQGGNQPQGPP), 135-154 (PPGKPQGPPPQGGNKPQGPP), 155-174 (PPGKPQGPPPQGDNKSRSSR), 176-195 (PPGKPQGPPPQGGNQPQGPP), 197-216 (PPGKPQGPPPQGGNKPQGPP), 217-236 (PPGKPQGPPPQGDNKSQSAR), 238-257 (PPGKPQGPPPQGGNQPQGPP), 259-278 (PPGKPQGPPPQGGNKPQGPP), 279-298 (PPGKPQGPPPQGGSKSRSSR), 300-319 (PPGKPQGPPPQGGNQPQGPP), 321-340 (PPGKPQGPPPQGGNKPQGPP), and 341-360 (PPGKPQGPPPQGGSKSRSAR). The 15 X 20 AA approximate tandem repeats of P-P-G-K-P-Q-G-P-P-P-Q-G-[GD]-[NKS]-[KSQ]-[PRS]-[QRS] [GPS]-[PSAR]-[PSR] stretch occupies residues 53 to 360 (PPGKPQGPPP…QGGSKSRSAR (308 aa)). The N-linked (GlcNAc...) asparagine glycan is linked to Asn-168. Over residues 177–227 (PGKPQGPPPQGGNQPQGPPPPPGKPQGPPPQGGNKPQGPPPPGKPQGPPPQ) the composition is skewed to pro residues. Asn-230 carries N-linked (GlcNAc...) asparagine glycosylation. Ser-232 carries O-linked (Hex) serine glycosylation. A compositionally biased stretch (pro residues) spans 239 to 289 (PGKPQGPPPQGGNQPQGPPPPPGKPQGPPPQGGNKPQGPPPPGKPQGPPPQ). An N-linked (GlcNAc...) asparagine glycan is attached at Asn-272. Positions 290–300 (GGSKSRSSRSP) are enriched in low complexity. Pro residues-rich tracts occupy residues 301–351 (PGKP…PPPQ) and 378–416 (QGPPPPAGGNPQQPQAPPAGQPQGPPRPPQGGRPSRPPQ).

N- and O-glycosylated. In head and neck cancer patients, O-glycosylated with glucosylgalactosyl carbohydrate moiety. This modification would require prior hydroxylation on the lysine residue. Post-translationally, proteolytically cleaved at the tripeptide Xaa-Pro-Gln, where Xaa in the P(3) position is mostly lysine. The endoprotease may be of microbial origin. In terms of processing, pyroglutamate formation occurs on terminal Gln residues of cleaved peptides. Pyroglutamate formation found on at least Gln-398 and Gln-400.

It is found in the secreted. The polypeptide is Basic salivary proline-rich protein 2 (PRB2) (Homo sapiens (Human)).